Consider the following 532-residue polypeptide: Probable cytochrome c oxidase subunit 1 (532 aa).

8 consecutive transmembrane segments (helical) span residues 33–53 (IMYI…SLLF), 74–94 (VLIT…ALFG), 95–115 (GFGN…FPRL), 118–138 (ISFW…FVDG), 163–183 (MAIF…INLI), 200–220 (PLFV…MPVL), 252–272 (LFWF…FGIV), and 284–304 (IFGY…GFIV). H79 contributes to the Fe(II)-heme a binding site. Residues H258 and Y262 each coordinate Cu cation. H307 and H308 together coordinate Cu cation. 2 helical membrane-spanning segments follow: residues 318 to 338 (ALIY…IKIF) and 355 to 375 (MLFS…GIIL). H393 lines the heme a3 pocket. Transmembrane regions (helical) follow at residues 394 to 414 (FHYT…YYWF), 431 to 451 (FWIT…LGLA), and 473 to 493 (IGAG…FYTL). Fe(II)-heme a is bound at residue H395.

This sequence belongs to the heme-copper respiratory oxidase family.

Its subcellular location is the cell membrane. The enzyme catalyses 4 Fe(II)-[cytochrome c] + O2 + 8 H(+)(in) = 4 Fe(III)-[cytochrome c] + 2 H2O + 4 H(+)(out). It functions in the pathway energy metabolism; oxidative phosphorylation. Its function is as follows. Cytochrome c oxidase is the component of the respiratory chain that catalyzes the reduction of oxygen to water. Subunits 1-3 form the functional core of the enzyme complex. CO I is the catalytic subunit of the enzyme. Electrons originating in cytochrome c are transferred via the copper A center of subunit 2 and heme A of subunit 1 to the bimetallic center formed by heme A3 and copper B. This is Probable cytochrome c oxidase subunit 1 (ctaD) from Rickettsia felis (strain ATCC VR-1525 / URRWXCal2) (Rickettsia azadi).